The chain runs to 206 residues: 3-demethoxyubiquinol 3-hydroxylase (206 aa).

6 residues coordinate Fe cation: Glu-55, Glu-85, His-88, Glu-137, Glu-169, and His-172.

The protein belongs to the COQ7 family. Requires Fe cation as cofactor.

Its subcellular location is the cell membrane. It carries out the reaction a 5-methoxy-2-methyl-3-(all-trans-polyprenyl)benzene-1,4-diol + AH2 + O2 = a 3-demethylubiquinol + A + H2O. It participates in cofactor biosynthesis; ubiquinone biosynthesis. Functionally, catalyzes the hydroxylation of 2-nonaprenyl-3-methyl-6-methoxy-1,4-benzoquinol during ubiquinone biosynthesis. The protein is 3-demethoxyubiquinol 3-hydroxylase of Laribacter hongkongensis (strain HLHK9).